A 231-amino-acid polypeptide reads, in one-letter code: Ribonuclease HII (231 aa).

An RNase H type-2 domain is found at 38–227; the sequence is ELVAGGDEAG…IKSFYGQLKL (190 aa). A divalent metal cation-binding residues include Asp-44, Glu-45, and Asp-136.

The protein belongs to the RNase HII family. Mn(2+) serves as cofactor. Requires Mg(2+) as cofactor.

The protein resides in the cytoplasm. The enzyme catalyses Endonucleolytic cleavage to 5'-phosphomonoester.. In terms of biological role, endonuclease that specifically degrades the RNA of RNA-DNA hybrids. The protein is Ribonuclease HII of Carboxydothermus hydrogenoformans (strain ATCC BAA-161 / DSM 6008 / Z-2901).